The chain runs to 723 residues: Methionine--tRNA ligase (723 aa).

A 'HIGH' region motif is present at residues 12–22; it reads PYANGDIHLGH. Residues Cys-143, Cys-146, Cys-156, and Cys-159 each coordinate Zn(2+). The 'KMSKS' region motif lies at 345–349; it reads KMSKS. Residue Lys-348 participates in ATP binding. The segment at 568 to 604 is disordered; the sequence is PAAATAPAKDAKPAKEAGSQQRHAEKQQHAAGVSETA. The 112-residue stretch at 612-723 folds into the tRNA-binding domain; sequence DFTKVDLRIA…EGAQAGMRVK (112 aa).

It belongs to the class-I aminoacyl-tRNA synthetase family. MetG type 1 subfamily. Homodimer. The cofactor is Zn(2+).

It localises to the cytoplasm. The catalysed reaction is tRNA(Met) + L-methionine + ATP = L-methionyl-tRNA(Met) + AMP + diphosphate. Its function is as follows. Is required not only for elongation of protein synthesis but also for the initiation of all mRNA translation through initiator tRNA(fMet) aminoacylation. The chain is Methionine--tRNA ligase from Azoarcus sp. (strain BH72).